A 1482-amino-acid polypeptide reads, in one-letter code: Chromosome partition protein MukB (1482 aa).

34-41 contributes to the ATP binding site; sequence GGNGAGKS. Coiled-coil stretches lie at residues 326 to 472, 507 to 602, 780 to 805, 832 to 1110, and 1209 to 1265; these read LEAD…QTAH, NQRH…RRAP, RAAR…ATLS, DDPE…REQV, and VEAI…LQSV. Residues 666-783 form a flexible hinge region; the sequence is PGGSEDPRLN…SLPLFGRAAR (118 aa).

This sequence belongs to the SMC family. MukB subfamily. Homodimerization via its hinge domain. Binds to DNA via its C-terminal region. Interacts, and probably forms a ternary complex, with MukE and MukF via its C-terminal region. The complex formation is stimulated by calcium or magnesium. Interacts with tubulin-related protein FtsZ.

It localises to the cytoplasm. It is found in the nucleoid. Its function is as follows. Plays a central role in chromosome condensation, segregation and cell cycle progression. Functions as a homodimer, which is essential for chromosome partition. Involved in negative DNA supercoiling in vivo, and by this means organize and compact chromosomes. May achieve or facilitate chromosome segregation by condensation DNA from both sides of a centrally located replisome during cell division. In Klebsiella pneumoniae subsp. pneumoniae (strain ATCC 700721 / MGH 78578), this protein is Chromosome partition protein MukB.